Reading from the N-terminus, the 424-residue chain is Histidine--tRNA ligase (424 aa).

It belongs to the class-II aminoacyl-tRNA synthetase family. Homodimer.

The protein resides in the cytoplasm. The catalysed reaction is tRNA(His) + L-histidine + ATP = L-histidyl-tRNA(His) + AMP + diphosphate + H(+). This is Histidine--tRNA ligase from Francisella philomiragia subsp. philomiragia (strain ATCC 25017 / CCUG 19701 / FSC 153 / O#319-036).